The primary structure comprises 390 residues: Transforming growth factor beta-1 proprotein (390 aa).

The N-terminal stretch at 1-29 (MPPSGLRLLPLLLPLLWLLVLTPGRPAAG) is a signal peptide. Residues 30-74 (LSTCKTIDMELVKRKRIEAIRGQILSKLRLASPPSQGDVPPGPLP) form a straightjacket domain region. Residues 75 to 271 (EAVLALYNST…ATPLERAQHL (197 aa)) form an arm domain region. Asparagine 82, asparagine 136, and asparagine 176 each carry an N-linked (GlcNAc...) asparagine glycan. Positions 226-252 (DSKDNTLHVEINGFNSGRRGDLATIHG) are bowtie tail. The Cell attachment site signature appears at 244–246 (RGD). 4 disulfides stabilise this stretch: cysteine 285-cysteine 294, cysteine 293-cysteine 356, cysteine 322-cysteine 387, and cysteine 326-cysteine 389.

This sequence belongs to the TGF-beta family. As to quaternary structure, homodimer; disulfide-linked. Interacts with the serine proteases, HTRA1 and HTRA3: the interaction with either inhibits TGFB1-mediated signaling and the HTRA protease activity is required for this inhibition. May interact with THSD4; this interaction may lead to sequestration by FBN1 microfibril assembly and attenuation of TGFB signaling. Interacts with CD109, DPT and ASPN. Interacts with EFEMP2. Interacts with TSKU; the interaction contributes to regulation of the hair cycle. Interacts with TGFBR3. In terms of assembly, homodimer; disulfide-linked. Interacts with transforming growth factor beta-1 (TGF-beta-1) chain; interaction is non-covalent and maintains TGF-beta-1 in a latent state; each latency-associated peptide (LAP) monomer interacts with TGF-beta-1 in the other monomer. Interacts with LTBP1; leading to regulation of TGF-beta-1 activation. Interacts with LRRC32/GARP; leading to regulation of TGF-beta-1 activation on the surface of activated regulatory T-cells (Tregs). Interacts with LRRC33/NRROS; leading to regulation of TGF-beta-1 activation in macrophages and microglia. Interacts (via cell attachment site) with integrins ITGAV and ITGB6 (ITGAV:ITGB6), leading to release of the active TGF-beta-1. Interacts with NREP; the interaction results in a decrease in TGFB1 autoinduction. Interacts with HSP90AB1; inhibits latent TGFB1 activation. Homodimer; disulfide-linked. Interacts with TGF-beta receptors (TGFBR1 and TGFBR2), leading to signal transduction. In terms of processing, transforming growth factor beta-1 proprotein: The precursor proprotein is cleaved in the Golgi apparatus by FURIN to form Transforming growth factor beta-1 (TGF-beta-1) and Latency-associated peptide (LAP) chains, which remain non-covalently linked, rendering TGF-beta-1 inactive. N-glycosylated. Deglycosylation leads to activation of Transforming growth factor beta-1 (TGF-beta-1); mechanisms triggering deglycosylation-driven activation of TGF-beta-1 are however unclear.

Its subcellular location is the secreted. The protein localises to the extracellular space. The protein resides in the extracellular matrix. Transforming growth factor beta-1 proprotein: Precursor of the Latency-associated peptide (LAP) and Transforming growth factor beta-1 (TGF-beta-1) chains, which constitute the regulatory and active subunit of TGF-beta-1, respectively. Its function is as follows. Required to maintain the Transforming growth factor beta-1 (TGF-beta-1) chain in a latent state during storage in extracellular matrix. Associates non-covalently with TGF-beta-1 and regulates its activation via interaction with 'milieu molecules', such as LTBP1, LRRC32/GARP and LRRC33/NRROS, that control activation of TGF-beta-1. Interaction with LRRC33/NRROS regulates activation of TGF-beta-1 in macrophages and microglia. Interaction with LRRC32/GARP controls activation of TGF-beta-1 on the surface of activated regulatory T-cells (Tregs). Interaction with integrins (ITGAV:ITGB6 or ITGAV:ITGB8) results in distortion of the Latency-associated peptide chain and subsequent release of the active TGF-beta-1. In terms of biological role, multifunctional protein that regulates the growth and differentiation of various cell types and is involved in various processes, such as normal development, immune function, microglia function and responses to neurodegeneration. Activation into mature form follows different steps: following cleavage of the proprotein in the Golgi apparatus, Latency-associated peptide (LAP) and Transforming growth factor beta-1 (TGF-beta-1) chains remain non-covalently linked rendering TGF-beta-1 inactive during storage in extracellular matrix. At the same time, LAP chain interacts with 'milieu molecules', such as LTBP1, LRRC32/GARP and LRRC33/NRROS that control activation of TGF-beta-1 and maintain it in a latent state during storage in extracellular milieus. TGF-beta-1 is released from LAP by integrins (ITGAV:ITGB6 or ITGAV:ITGB8): integrin-binding to LAP stabilizes an alternative conformation of the LAP bowtie tail and results in distortion of the LAP chain and subsequent release of the active TGF-beta-1. Once activated following release of LAP, TGF-beta-1 acts by binding to TGF-beta receptors (TGFBR1 and TGFBR2), which transduce signal. While expressed by many cells types, TGF-beta-1 only has a very localized range of action within cell environment thanks to fine regulation of its activation by Latency-associated peptide chain (LAP) and 'milieu molecules'. Plays an important role in bone remodeling: acts as a potent stimulator of osteoblastic bone formation, causing chemotaxis, proliferation and differentiation in committed osteoblasts. Can promote either T-helper 17 cells (Th17) or regulatory T-cells (Treg) lineage differentiation in a concentration-dependent manner. At high concentrations, leads to FOXP3-mediated suppression of RORC and down-regulation of IL-17 expression, favoring Treg cell development. At low concentrations in concert with IL-6 and IL-21, leads to expression of the IL-17 and IL-23 receptors, favoring differentiation to Th17 cells. Stimulates sustained production of collagen through the activation of CREB3L1 by regulated intramembrane proteolysis (RIP). Mediates SMAD2/3 activation by inducing its phosphorylation and subsequent translocation to the nucleus. Positively regulates odontoblastic differentiation in dental papilla cells, via promotion of IPO7-mediated translocation of phosphorylated SMAD2 to the nucleus and subsequent transcription of target genes. Can induce epithelial-to-mesenchymal transition (EMT) and cell migration in various cell types. This Sus scrofa (Pig) protein is Transforming growth factor beta-1 proprotein (TGFB1).